The primary structure comprises 87 residues: Neutrophil antibiotic peptide NP-3A (87 aa).

The signal sequence occupies residues 1 to 19 (MRTLTLLTTLLLLALHTQA). Positions 20-58 (ESPQGSTKEAPDEEQDISVFFGGDKGTALQDAAVKAGVT) are excised as a propeptide. 3 disulfides stabilise this stretch: Cys59-Cys87, Cys61-Cys76, and Cys66-Cys86.

Belongs to the alpha-defensin family. As to expression, highest expression in bone marrow and to a much lesser extent in small intestine.

The protein localises to the secreted. In terms of biological role, active in vitro against S.aureus, fungi, Gram-positive and Gram-negative bacteria and to a lesser extent against an enveloped virus. The chain is Neutrophil antibiotic peptide NP-3A from Rattus norvegicus (Rat).